The primary structure comprises 233 residues: Protein AC81 (233 aa).

A run of 2 helical transmembrane segments spans residues 171–191 (SFQT…VEKF) and 194–214 (INLL…NYII).

Its subcellular location is the host nucleus. The protein resides in the host membrane. It localises to the virion. Functionally, plays an essential role in the assembly of nucleocapsids with envelopes. This is Protein AC81 (AC81) from Autographa californica nuclear polyhedrosis virus (AcMNPV).